The primary structure comprises 217 residues: Translation initiation factor IF-3 (217 aa).

Residues 179–217 (PRKTPLVKKEEKEAAPTKAVRTIPAPPRPTAAKVAAQQA) are disordered.

The protein belongs to the IF-3 family. As to quaternary structure, monomer.

It localises to the cytoplasm. Functionally, IF-3 binds to the 30S ribosomal subunit and shifts the equilibrium between 70S ribosomes and their 50S and 30S subunits in favor of the free subunits, thus enhancing the availability of 30S subunits on which protein synthesis initiation begins. In Parasynechococcus marenigrum (strain WH8102), this protein is Translation initiation factor IF-3.